The primary structure comprises 251 residues: Hydroxyacylglutathione hydrolase (251 aa).

Zn(2+) is bound by residues H53, H55, D57, H58, H110, D127, and H165.

The protein belongs to the metallo-beta-lactamase superfamily. Glyoxalase II family. In terms of assembly, monomer. It depends on Zn(2+) as a cofactor.

It catalyses the reaction an S-(2-hydroxyacyl)glutathione + H2O = a 2-hydroxy carboxylate + glutathione + H(+). It functions in the pathway secondary metabolite metabolism; methylglyoxal degradation; (R)-lactate from methylglyoxal: step 2/2. Its function is as follows. Thiolesterase that catalyzes the hydrolysis of S-D-lactoyl-glutathione to form glutathione and D-lactic acid. The polypeptide is Hydroxyacylglutathione hydrolase (Yersinia enterocolitica serotype O:8 / biotype 1B (strain NCTC 13174 / 8081)).